We begin with the raw amino-acid sequence, 370 residues long: DNA repair protein RAD51 homolog 2 (370 aa).

109 to 116 (GPPGIGKS) contributes to the ATP binding site.

This sequence belongs to the RecA family. RAD51 subfamily. As to expression, preferentially expressed in flower buds and roots.

It localises to the nucleus. In terms of biological role, may be involved in the homologous recombination repair (HRR) pathway of double-stranded DNA breaks arising during DNA replication or induced by DNA-damaging agents. The protein is DNA repair protein RAD51 homolog 2 (RAD51B) of Arabidopsis thaliana (Mouse-ear cress).